Reading from the N-terminus, the 141-residue chain is Large ribosomal subunit protein uL11 (141 aa).

This sequence belongs to the universal ribosomal protein uL11 family. Part of the ribosomal stalk of the 50S ribosomal subunit. Interacts with L10 and the large rRNA to form the base of the stalk. L10 forms an elongated spine to which L12 dimers bind in a sequential fashion forming a multimeric L10(L12)X complex. Post-translationally, one or more lysine residues are methylated.

Forms part of the ribosomal stalk which helps the ribosome interact with GTP-bound translation factors. This chain is Large ribosomal subunit protein uL11, found in Bacillus cereus (strain ATCC 10987 / NRS 248).